The primary structure comprises 1930 residues: Myosin-16 (1930 aa).

Residues 35–84 (DIKKSCWVKDEKEGFIAGEIQSEQGDQVTVKTVNNQTVTVKKDDVQQMNP) enclose the Myosin N-terminal SH3-like domain. One can recognise a Myosin motor domain in the interval 88–774 (YQASDMADMT…ILAKLEDMRD (687 aa)). Residue 181–188 (GESGAGKT) coordinates ATP. 2 actin-binding regions span residues 652–674 (LNKL…VPNE) and 753–767 (KIGH…GILA). Residues 777-806 (LAKIMTMLQCRLRGFLMRIEFKKMLERRIG) form the IQ domain. Residues 835–1921 (LLNVARQEEE…ALNKLRTRHR (1087 aa)) adopt a coiled-coil conformation. The interval 1116–1137 (EELEAERSMRAKVEKQRSDLSR) is disordered. A compositionally biased stretch (basic and acidic residues) spans 1120–1137 (AERSMRAKVEKQRSDLSR).

It belongs to the TRAFAC class myosin-kinesin ATPase superfamily. Myosin family.

It is found in the cytoplasm. Its subcellular location is the myofibril. May play a role in masticatory muscles contraction. This chain is Myosin-16, found in Canis lupus familiaris (Dog).